The primary structure comprises 499 residues: Serine/threonine-protein kinase SSN3 (499 aa).

The interval 1–21 (MSHSNPPTGASGGPGSASASA) is disordered. One can recognise a Protein kinase domain in the interval 61–442 (YQVIGFISSG…AAAALQHNFF (382 aa)). Residues 67-75 (ISSGTYGRV) and lysine 91 contribute to the ATP site. Aspartate 193 acts as the Proton acceptor in catalysis. Disordered stretches follow at residues 332-376 (SASG…SAAA) and 463-499 (RRVS…RVKE). The segment covering 365–376 (SSSSANSSSAAA) has biased composition (low complexity). A compositionally biased stretch (basic and acidic residues) spans 463 to 472 (RRVSQEDNDI).

Belongs to the protein kinase superfamily. CMGC Ser/Thr protein kinase family. CDC2/CDKX subfamily. In terms of assembly, component of the SRB8-11 complex, a regulatory module of the Mediator complex. Requires Mg(2+) as cofactor.

The protein resides in the nucleus. It catalyses the reaction L-seryl-[protein] + ATP = O-phospho-L-seryl-[protein] + ADP + H(+). It carries out the reaction L-threonyl-[protein] + ATP = O-phospho-L-threonyl-[protein] + ADP + H(+). The catalysed reaction is [DNA-directed RNA polymerase] + ATP = phospho-[DNA-directed RNA polymerase] + ADP + H(+). Functionally, component of the SRB8-11 complex. The SRB8-11 complex is a regulatory module of the Mediator complex which is itself involved in regulation of basal and activated RNA polymerase II-dependent transcription. The SRB8-11 complex may be involved in the transcriptional repression of a subset of genes regulated by Mediator. It may inhibit the association of the Mediator complex with RNA polymerase II to form the holoenzyme complex. The SRB8-11 complex phosphorylates the C-terminal domain (CTD) of the largest subunit of RNA polymerase II. In Pyricularia oryzae (strain 70-15 / ATCC MYA-4617 / FGSC 8958) (Rice blast fungus), this protein is Serine/threonine-protein kinase SSN3 (SSN3).